A 263-amino-acid polypeptide reads, in one-letter code: Probable ribosomal RNA small subunit methyltransferase A (263 aa).

S-adenosyl-L-methionine is bound by residues leucine 12, glycine 37, glutamate 58, aspartate 83, and asparagine 100.

It belongs to the class I-like SAM-binding methyltransferase superfamily. rRNA adenine N(6)-methyltransferase family. RsmA subfamily.

Its subcellular location is the cytoplasm. Its function is as follows. Specifically dimethylates two adjacent adenosines in the loop of a conserved hairpin near the 3'-end of 16S rRNA in the 30S particle. May play a critical role in biogenesis of 30S subunits. The polypeptide is Probable ribosomal RNA small subunit methyltransferase A (Methanococcus maripaludis (strain C5 / ATCC BAA-1333)).